The chain runs to 865 residues: Probable alpha/beta-glucosidase ARB_02101 (865 aa).

The signal sequence occupies residues 1-21 (MFGRTLALAAVFATTVLSAAA). N-linked (GlcNAc...) asparagine glycans are attached at residues Asn101 and Asn299. Catalysis depends on Asp428, which acts as the Nucleophile. Glu431 is a catalytic residue. Residue Asn515 is glycosylated (N-linked (GlcNAc...) asparagine). The Proton donor role is filled by Asp548. N-linked (GlcNAc...) asparagine glycans are attached at residues Asn549, Asn585, and Asn748.

This sequence belongs to the glycosyl hydrolase 31 family.

Its subcellular location is the secreted. It catalyses the reaction Hydrolysis of terminal, non-reducing (1-&gt;4)-linked alpha-D-glucose residues with release of alpha-D-glucose.. The catalysed reaction is Hydrolysis of terminal, non-reducing beta-D-glucosyl residues with release of beta-D-glucose.. Glucosidase involved in the degradation of cellulosic biomass. Has both alpha- and beta-glucosidase activity. This chain is Probable alpha/beta-glucosidase ARB_02101, found in Arthroderma benhamiae (strain ATCC MYA-4681 / CBS 112371) (Trichophyton mentagrophytes).